The chain runs to 377 residues: RIB43A-like with coiled-coils protein 2 (377 aa).

Residues 217–246 adopt a coiled-coil conformation; sequence NKNQVVELTERKRQEKQQEQEDNMTEITNL. The disordered stretch occupies residues 354–377; the sequence is KQMNTASSSQPTEDYFSQFNTRSR.

This sequence belongs to the RIB43A family. As to quaternary structure, microtubule inner protein component of sperm flagellar doublet microtubules.

It localises to the cytoplasm. The protein localises to the cytoskeleton. Its subcellular location is the cilium axoneme. It is found in the flagellum axoneme. In terms of biological role, microtubule inner protein (MIP) part of the dynein-decorated doublet microtubules (DMTs) in cilia axoneme, which is required for motile cilia beating. This Mus musculus (Mouse) protein is RIB43A-like with coiled-coils protein 2.